Here is a 551-residue protein sequence, read N- to C-terminus: uncharacterized protein (551 aa).

Disordered regions lie at residues 66-111 (GNNK…STNL), 130-165 (PEAT…EKSN), 180-229 (AFNP…LSNL), and 277-303 (AFTS…VPLS). S74 carries the post-translational modification Phosphoserine. 2 stretches are compositionally biased toward polar residues: residues 92 to 111 (GFSN…STNL) and 143 to 156 (VVNT…GTQE). Residues 182–193 (NPSSVLPSNSSS) are compositionally biased toward low complexity. Polar residues predominate over residues 204-226 (KETYQPNTFRRSPLKNDTGSVEL). Over residues 290–299 (TRPSSTRFPS) the composition is skewed to low complexity.

This is an uncharacterized protein from Schizosaccharomyces pombe (strain 972 / ATCC 24843) (Fission yeast).